We begin with the raw amino-acid sequence, 146 residues long: Large ribosomal subunit protein bL19 (146 aa).

The segment at 119-146 is disordered; that stretch reads DYRKKGEKGVEKVETTPVSADIETQVAE.

The protein belongs to the bacterial ribosomal protein bL19 family.

This protein is located at the 30S-50S ribosomal subunit interface and may play a role in the structure and function of the aminoacyl-tRNA binding site. This Bartonella tribocorum (strain CIP 105476 / IBS 506) protein is Large ribosomal subunit protein bL19.